The following is a 151-amino-acid chain: HTH-type transcriptional regulator TcaR (151 aa).

Residues 1–142 (MVKHLQDHIQ…VRQVLEVINH (142 aa)) enclose the HTH marR-type domain. Positions 54–77 (ISEITQRQGVNKAAVSRRIKKLID) form a DNA-binding region, H-T-H motif.

In terms of biological role, involved in the antibiotic teicoplanin susceptibility. Inactivation of the tcaRAB operon leads to teicoplanin resistance. Its function is as follows. Is a weak negative regulator of transcription of the icaABD operon. The protein is HTH-type transcriptional regulator TcaR (tcaR) of Staphylococcus aureus (strain COL).